Consider the following 510-residue polypeptide: Light-independent protochlorophyllide reductase subunit B (510 aa).

Asp36 contributes to the [4Fe-4S] cluster binding site. Asp297 acts as the Proton donor in catalysis. 432 to 433 (GM) provides a ligand contact to substrate.

It belongs to the ChlB/BchB/BchZ family. Protochlorophyllide reductase is composed of three subunits; ChlL, ChlN and ChlB. Forms a heterotetramer of two ChlB and two ChlN subunits. The cofactor is [4Fe-4S] cluster.

It is found in the plastid. Its subcellular location is the chloroplast. It carries out the reaction chlorophyllide a + oxidized 2[4Fe-4S]-[ferredoxin] + 2 ADP + 2 phosphate = protochlorophyllide a + reduced 2[4Fe-4S]-[ferredoxin] + 2 ATP + 2 H2O. It participates in porphyrin-containing compound metabolism; chlorophyll biosynthesis (light-independent). Its function is as follows. Component of the dark-operative protochlorophyllide reductase (DPOR) that uses Mg-ATP and reduced ferredoxin to reduce ring D of protochlorophyllide (Pchlide) to form chlorophyllide a (Chlide). This reaction is light-independent. The NB-protein (ChlN-ChlB) is the catalytic component of the complex. In Pinus koraiensis (Korean pine), this protein is Light-independent protochlorophyllide reductase subunit B.